A 587-amino-acid chain; its full sequence is Methylcrotonoyl-CoA carboxylase beta chain, mitochondrial (587 aa).

The transit peptide at methionine 1–proline 26 directs the protein to the mitochondrion. The CoA carboxyltransferase N-terminal domain maps to methionine 68 to phenylalanine 324. A carboxyltransferase region spans residues methionine 68 to aspartate 579. Residues glutamate 333–aspartate 579 enclose the CoA carboxyltransferase C-terminal domain. Positions glutamate 367 to asparagine 396 are acyl-CoA binding.

This sequence belongs to the AccD/PCCB family. Probably a heterodimer composed of biotin-containing alpha subunits and beta subunits. In terms of tissue distribution, in roots, cotyledons, leaves, flowers, ovaries, siliques and embryos.

It is found in the mitochondrion matrix. It carries out the reaction 3-methylbut-2-enoyl-CoA + hydrogencarbonate + ATP = 3-methyl-(2E)-glutaconyl-CoA + ADP + phosphate + H(+). It functions in the pathway amino-acid degradation; L-leucine degradation; (S)-3-hydroxy-3-methylglutaryl-CoA from 3-isovaleryl-CoA: step 2/3. Functionally, carboxyltransferase subunit of the 3-methylcrotonyl-CoA carboxylase, an enzyme that catalyzes the conversion of 3-methylcrotonyl-CoA to 3-methylglutaconyl-CoA, a critical step for leucine and isovaleric acid catabolism. The protein is Methylcrotonoyl-CoA carboxylase beta chain, mitochondrial (MCCB) of Arabidopsis thaliana (Mouse-ear cress).